Here is a 157-residue protein sequence, read N- to C-terminus: Ribosomal RNA large subunit methyltransferase H (157 aa).

Residues leucine 73, glycine 104, and leucine 121–leucine 126 contribute to the S-adenosyl-L-methionine site.

The protein belongs to the RNA methyltransferase RlmH family. In terms of assembly, homodimer.

Its subcellular location is the cytoplasm. It carries out the reaction pseudouridine(1915) in 23S rRNA + S-adenosyl-L-methionine = N(3)-methylpseudouridine(1915) in 23S rRNA + S-adenosyl-L-homocysteine + H(+). Specifically methylates the pseudouridine at position 1915 (m3Psi1915) in 23S rRNA. The chain is Ribosomal RNA large subunit methyltransferase H from Acidithiobacillus ferrooxidans (strain ATCC 23270 / DSM 14882 / CIP 104768 / NCIMB 8455) (Ferrobacillus ferrooxidans (strain ATCC 23270)).